The following is a 90-amino-acid chain: DNA-binding protein HU-alpha (90 aa).

This sequence belongs to the bacterial histone-like protein family. In terms of assembly, heterodimer of an alpha and a beta chain.

In terms of biological role, histone-like DNA-binding protein which is capable of wrapping DNA to stabilize it, and thus to prevent its denaturation under extreme environmental conditions. This chain is DNA-binding protein HU-alpha (hupA), found in Vibrio proteolyticus (Aeromonas proteolytica).